The following is a 406-amino-acid chain: Lysophospholipid transporter LplT (406 aa).

The next 11 membrane-spanning stretches (helical) occupy residues 16–36 (MVAV…LLFA), 53–73 (ILQM…GQIA), 91–111 (AGAL…LVGV), 139–159 (MMEA…GILA), 164–184 (MAAL…NLFI), 227–247 (LFWG…PVAL), 253–273 (ATPT…AGAA), 285–305 (CLPA…QNSM), 310–330 (LLLI…NALL), 349–369 (LGEN…VKLG), and 372–392 (VVAV…LLWG).

It belongs to the major facilitator superfamily. LplT (TC 2.A.1.42) family.

Its subcellular location is the cell inner membrane. Catalyzes the facilitated diffusion of 2-acyl-glycero-3-phosphoethanolamine (2-acyl-GPE) into the cell. The protein is Lysophospholipid transporter LplT of Yersinia pestis bv. Antiqua (strain Antiqua).